The chain runs to 455 residues: Histone chaperone RTT106 (455 aa).

Ser2 bears the N-acetylserine mark. Positions Ser2–Ile67 are dimeric region. 2 consecutive PH domains span residues Ser68–Ile200 and Ile217–Lys301. Positions Ser68 to Lys301 are double PH domain. The segment covering Asp305 to Ala314 has biased composition (basic and acidic residues). Residues Asp305 to Asp455 form a disordered region. Over residues Lys319–Gln339 the composition is skewed to polar residues. Composition is skewed to acidic residues over residues Ser350 to Leu366 and Asp376 to Glu395. The span at Ala402–Gln418 shows a compositional bias: polar residues. Residues Ser408 and Ser411 each carry the phosphoserine modification. Basic and acidic residues predominate over residues Leu420 to Leu429. The segment covering Glu430–Asp455 has biased composition (acidic residues). A Phosphoserine modification is found at Ser450.

This sequence belongs to the RTT106 family. As to quaternary structure, homodimers (via the N-terminal domain). Interacts with the SWI/SNF complex. Interacts with the RSC complex. Interacts with the HIR complex. Interacts with the CAF-1 complex. Interacts with RLF2. Interacts with SIR4. Interacts with YTA7. Interacts with CAC2. Interacts with HPC2. Interacts with HIR2. Interacts with MSI1. Interacts with HIR1. Interacts with histone H3. Interacts with histone H4.

Its subcellular location is the nucleus. It localises to the chromosome. Histones H3 and H4 chaperone involved in the nucleosome formation and heterochromatin silencing. Required for the deposition of H3K56ac-carrying H3-H4 complex onto newly-replicated DNA. Plays a role in the transcriptional regulation of the cell-cycle dependent histone genes by directly recruiting the SWI/SNF and RSC chromatin remodeling complexes to the histone genes in a cell cycle dependent manner. In cooperation with HIR and ASF1, creates a repressive structure at the core histone gene promoter and contributes to their repression outside of S phase. Involved in regulation of Ty1 transposition. The sequence is that of Histone chaperone RTT106 from Saccharomyces cerevisiae (strain ATCC 204508 / S288c) (Baker's yeast).